The sequence spans 273 residues: MGQKVTGGIKTVDMRDPTYRPLKQELQGLDYCKPTRLDLLLDMPPVSYDVQLLHSWNNNDRSLNVFVKEDDKLIFHRHPVAQSTDAIRGKVGYTRGLHVWQITWAMRQRGTHAVVGVATADAPLHSVGYTTLVGNNHESWGWDLGRNRLYHDGKNQPSKTYPAFLEPDETFIVPDSFLVALDMDDGTLSFIVDGQYMGVAFRGLKGKKLYPVVSAVWGHCEIRMRYLNGLDPEPLPLMDLCRRSVRLALGKGRLGEIHALPLPASLKAYLLYQ.

Position 31 is a phosphotyrosine (tyrosine 31). The region spanning 33-231 (KPTRLDLLLD…IRMRYLNGLD (199 aa)) is the B30.2/SPRY domain. The region spanning 232-273 (PEPLPLMDLCRRSVRLALGKGRLGEIHALPLPASLKAYLLYQ) is the SOCS box domain.

The protein belongs to the SPSB family. Component of the probable ECS(SPSB1) E3 ubiquitin-protein ligase complex which contains CUL5, RNF7/RBX2, Elongin BC complex and SPSB1. Interacts with CUL5, RNF7, ELOB and ELOC. Directly interacts with MET tyrosine kinase domain in the presence and in the absence of HGF, however HGF treatment has a positive effect on this interaction. When phosphorylated, interacts with RASA1 without affecting its stability. Interacts (via B30.2/SPRY domain) with PAWR; this interaction is direct and occurs in association with the Elongin BC complex. Interacts with NOS2 and EPHB2.

It is found in the cytoplasm. The protein resides in the cytosol. It functions in the pathway protein modification; protein ubiquitination. Its function is as follows. Substrate recognition component of a SCF-like ECS (Elongin BC-CUL2/5-SOCS-box protein) E3 ubiquitin-protein ligase complex which mediates the ubiquitination and subsequent proteasomal degradation of target proteins. Negatively regulates nitric oxide (NO) production and limits cellular toxicity in activated macrophages by mediating the ubiquitination and proteasomal degradation of NOS2. Acts as a bridge which links NOS2 with the ECS E3 ubiquitin ligase complex components ELOC and CUL5. This is SPRY domain-containing SOCS box protein 1 (SPSB1) from Bos taurus (Bovine).